The sequence spans 205 residues: Superoxide dismutase [Mn] (205 aa).

H30, H78, D166, and H170 together coordinate Mn(2+).

It belongs to the iron/manganese superoxide dismutase family. Homodimer. It depends on Mn(2+) as a cofactor.

The enzyme catalyses 2 superoxide + 2 H(+) = H2O2 + O2. Destroys superoxide anion radicals which are normally produced within the cells and which are toxic to biological systems. In Chlamydia muridarum (strain MoPn / Nigg), this protein is Superoxide dismutase [Mn] (sodA).